The sequence spans 310 residues: Oxygen-dependent coproporphyrinogen-III oxidase (310 aa).

S93 is a binding site for substrate. H97 and H107 together coordinate a divalent metal cation. H107 functions as the Proton donor in the catalytic mechanism. Residue 109-111 coordinates substrate; it reads NVR. 2 residues coordinate a divalent metal cation: H146 and H176. The segment at 241–276 is important for dimerization; it reads YVEFNLVYDRGTLFGLQSGGRTESILMSLPPQVRWS. A substrate-binding site is contributed by 259–261; it reads GGR.

It belongs to the aerobic coproporphyrinogen-III oxidase family. In terms of assembly, homodimer. A divalent metal cation serves as cofactor.

The protein resides in the cytoplasm. It carries out the reaction coproporphyrinogen III + O2 + 2 H(+) = protoporphyrinogen IX + 2 CO2 + 2 H2O. The protein operates within porphyrin-containing compound metabolism; protoporphyrin-IX biosynthesis; protoporphyrinogen-IX from coproporphyrinogen-III (O2 route): step 1/1. In terms of biological role, involved in the heme biosynthesis. Catalyzes the aerobic oxidative decarboxylation of propionate groups of rings A and B of coproporphyrinogen-III to yield the vinyl groups in protoporphyrinogen-IX. The polypeptide is Oxygen-dependent coproporphyrinogen-III oxidase (Pseudomonas fluorescens (strain SBW25)).